The chain runs to 514 residues: L-threonine dehydratase biosynthetic IlvA (514 aa).

Position 62 is an N6-(pyridoxal phosphate)lysine (Lys62). Pyridoxal 5'-phosphate-binding positions include Asn89, 188 to 192, and Ser315; that span reads GGGGL. 2 consecutive ACT-like domains span residues 339 to 411 and 434 to 504; these read ALLA…DLSD and RLYS…DETN.

This sequence belongs to the serine/threonine dehydratase family. Homotetramer. The cofactor is pyridoxal 5'-phosphate.

It carries out the reaction L-threonine = 2-oxobutanoate + NH4(+). It participates in amino-acid biosynthesis; L-isoleucine biosynthesis; 2-oxobutanoate from L-threonine: step 1/1. With respect to regulation, isoleucine allosterically inhibits whereas valine allosterically activates this enzyme. In terms of biological role, catalyzes the anaerobic formation of alpha-ketobutyrate and ammonia from threonine in a two-step reaction. The first step involved a dehydration of threonine and a production of enamine intermediates (aminocrotonate), which tautomerizes to its imine form (iminobutyrate). Both intermediates are unstable and short-lived. The second step is the nonenzymatic hydrolysis of the enamine/imine intermediates to form 2-ketobutyrate and free ammonia. In the low water environment of the cell, the second step is accelerated by RidA. This is L-threonine dehydratase biosynthetic IlvA (ilvA) from Escherichia coli (strain K12).